The chain runs to 144 residues: Large ribosomal subunit protein uL11 (144 aa).

The protein belongs to the universal ribosomal protein uL11 family. As to quaternary structure, part of the ribosomal stalk of the 50S ribosomal subunit. Interacts with L10 and the large rRNA to form the base of the stalk. L10 forms an elongated spine to which L12 dimers bind in a sequential fashion forming a multimeric L10(L12)X complex. Post-translationally, one or more lysine residues are methylated.

Its function is as follows. Forms part of the ribosomal stalk which helps the ribosome interact with GTP-bound translation factors. This chain is Large ribosomal subunit protein uL11, found in Polaromonas naphthalenivorans (strain CJ2).